A 572-amino-acid chain; its full sequence is Proline--tRNA ligase (572 aa).

This sequence belongs to the class-II aminoacyl-tRNA synthetase family. ProS type 1 subfamily. As to quaternary structure, homodimer.

It localises to the cytoplasm. It carries out the reaction tRNA(Pro) + L-proline + ATP = L-prolyl-tRNA(Pro) + AMP + diphosphate. Functionally, catalyzes the attachment of proline to tRNA(Pro) in a two-step reaction: proline is first activated by ATP to form Pro-AMP and then transferred to the acceptor end of tRNA(Pro). As ProRS can inadvertently accommodate and process non-cognate amino acids such as alanine and cysteine, to avoid such errors it has two additional distinct editing activities against alanine. One activity is designated as 'pretransfer' editing and involves the tRNA(Pro)-independent hydrolysis of activated Ala-AMP. The other activity is designated 'posttransfer' editing and involves deacylation of mischarged Ala-tRNA(Pro). The misacylated Cys-tRNA(Pro) is not edited by ProRS. The chain is Proline--tRNA ligase from Shewanella amazonensis (strain ATCC BAA-1098 / SB2B).